A 651-amino-acid polypeptide reads, in one-letter code: Bromodomain-containing protein 7 (651 aa).

Residue lysine 21 forms a Glycyl lysine isopeptide (Lys-Gly) (interchain with G-Cter in SUMO2) linkage. Residues 35-45 show a composition bias toward polar residues; the sequence is TELSTGSSGHD. The disordered stretch occupies residues 35–132; the sequence is TELSTGSSGH…SSLAKQEEVE (98 aa). Basic and acidic residues predominate over residues 47 to 57; sequence SLFEDKNDHDK. Lysine 52 participates in a covalent cross-link: Glycyl lysine isopeptide (Lys-Gly) (interchain with G-Cter in SUMO2). Positions 58–69 are enriched in basic residues; it reads HKDRKRKKRKKG. Residues 65 to 96 carry the Nuclear localization signal motif; sequence KRKKGEKQIPGEEKGRKRRRVKEDKKKRDRDR. Basic and acidic residues predominate over residues 70–106; the sequence is EKQIPGEEKGRKRRRVKEDKKKRDRDRVENEAEKDLQ. Glycyl lysine isopeptide (Lys-Gly) (interchain with G-Cter in SUMO2) cross-links involve residues lysine 127, lysine 186, lysine 197, lysine 201, lysine 212, and lysine 241. The Bromo domain maps to 131–235; the sequence is VEQTPLQEAL…HSGMKILSQE (105 aa). Residues 253–301 form a disordered region; that stretch reads TRKQKDGTDTSQSGEDGGCWQREREDSGDAEAHAFKSPSKENKKKDKDM. Residues 273-301 show a composition bias toward basic and acidic residues; that stretch reads QREREDSGDAEAHAFKSPSKENKKKDKDM. Serine 279 and serine 289 each carry phosphoserine. Glycyl lysine isopeptide (Lys-Gly) (interchain with G-Cter in SUMO2) cross-links involve residues lysine 305 and lysine 307. Lysine 328 is subject to N6-acetyllysine. Lysine 344 is covalently cross-linked (Glycyl lysine isopeptide (Lys-Gly) (interchain with G-Cter in SUMO2)). A Phosphoserine modification is found at serine 380. Lysine 389 participates in a covalent cross-link: Glycyl lysine isopeptide (Lys-Gly) (interchain with G-Cter in SUMO2). Phosphoserine is present on serine 482. A Phosphothreonine modification is found at threonine 514. A coiled-coil region spans residues 536 to 567; sequence SEEAEIFQKKLDETTRLLRELQEAQNERLSTR. Position 621 is a phosphoserine (serine 621).

Interacts with TRIM24, PTPN13 and DVL1. Identified in a complex with SMARCA4/BRG1, SMARCC1/BAF155, SMARCE1/BAF57, DPF2/BAF45D and ARID2, subunits of the SWI/SNF-B (PBAF) chromatin remodeling complex. Interacts with IRF2 and HNRPUL1. Interacts (via N-terminus) with TP53. Interacts (via C-terminus) with EP300. Interacts with BRCA1. Interacts (via bromo domain) with histone H3 (via N-terminus) acetylated at 'Lys-14' (H3K14ac). Has low affinity for histone H3 acetylated at 'Lys-9' (H3K9ac). Has the highest affinity for histone H3 that is acetylated both at 'Lys-9' (H3K9ac) and at 'Lys-14' (H3K14ac). Has very low affinity for non-acetylated histone H3. Interacts (via bromo domain) with histone H4 (via N-terminus) acetylated at 'Lys-8' (H3K8ac) (in vitro).

The protein resides in the nucleus. It localises to the chromosome. In terms of biological role, acts both as coactivator and as corepressor. May play a role in chromatin remodeling. Activator of the Wnt signaling pathway in a DVL1-dependent manner by negatively regulating the GSK3B phosphotransferase activity. Induces dephosphorylation of GSK3B at 'Tyr-216'. Down-regulates TRIM24-mediated activation of transcriptional activation by AR. Transcriptional corepressor that down-regulates the expression of target genes. Binds to target promoters, leading to increased histone H3 acetylation at 'Lys-9' (H3K9ac). Binds to the ESR1 promoter. Recruits BRCA1 and POU2F1 to the ESR1 promoter. Coactivator for TP53-mediated activation of transcription of a set of target genes. Required for TP53-mediated cell-cycle arrest in response to oncogene activation. Promotes acetylation of TP53 at 'Lys-382', and thereby promotes efficient recruitment of TP53 to target promoters. Inhibits cell cycle progression from G1 to S phase. This chain is Bromodomain-containing protein 7 (BRD7), found in Homo sapiens (Human).